A 352-amino-acid polypeptide reads, in one-letter code: Ion-translocating oxidoreductase complex subunit D (352 aa).

5 helical membrane-spanning segments follow: residues 20–40, 42–62, 78–109, 123–143, and 148–168; these read IMLL…WFFG, GTLV…ALVL, ALLT…VIIA, PAMI…TSWL, and IAVN…GHTA. An FMN phosphoryl threonine modification is found at Thr-187. 5 helical membrane passes run 214–234, 242–262, 267–287, 301–321, and 322–342; these read ILAG…GLWL, WHIP…GWLF, LAAP…FFIL, LIFG…GGYP, and DGVA…DYYT.

It belongs to the NqrB/RnfD family. In terms of assembly, the complex is composed of six subunits: RsxA, RsxB, RsxC, RsxD, RsxE and RsxG. It depends on FMN as a cofactor.

It is found in the cell inner membrane. Its function is as follows. Part of a membrane-bound complex that couples electron transfer with translocation of ions across the membrane. Required to maintain the reduced state of SoxR. The sequence is that of Ion-translocating oxidoreductase complex subunit D from Escherichia coli (strain SE11).